Reading from the N-terminus, the 434-residue chain is Adenylosuccinate synthetase (434 aa).

GTP contacts are provided by residues 15-21 (GDEGKGK) and 43-45 (GHT). D16 (proton acceptor) is an active-site residue. Mg(2+) is bound by residues D16 and G43. IMP is bound by residues 16–19 (DEGK), 41–44 (NAGH), T133, R147, Q228, T243, and R307. Residue H44 is the Proton donor of the active site. 303-309 (SVTGRAR) is a substrate binding site. GTP-binding positions include R309, 335-337 (KLD), and 418-420 (STG).

This sequence belongs to the adenylosuccinate synthetase family. Homodimer. The cofactor is Mg(2+).

Its subcellular location is the cytoplasm. It carries out the reaction IMP + L-aspartate + GTP = N(6)-(1,2-dicarboxyethyl)-AMP + GDP + phosphate + 2 H(+). It functions in the pathway purine metabolism; AMP biosynthesis via de novo pathway; AMP from IMP: step 1/2. Plays an important role in the de novo pathway of purine nucleotide biosynthesis. Catalyzes the first committed step in the biosynthesis of AMP from IMP. The polypeptide is Adenylosuccinate synthetase (Neisseria gonorrhoeae (strain NCCP11945)).